A 215-amino-acid chain; its full sequence is Ras-related protein Rab-5B (215 aa).

GTP contacts are provided by S29, A30, G32, K33, S34, S35, H46, E47, T52, G78, N133, K134, D136, A164, and K165. S34 contributes to the Mg(2+) binding site. Short sequence motifs (switch) lie at residues 44 to 56 (QFHEYQESTIGAA) and 77 to 93 (AGQERYHSLAPMYYRGA). Residue T52 participates in Mg(2+) binding. The interval 184-215 (SEPQSTSGAAGRSRGVDLHEQTQQNKSQCCSN) is disordered. Polar residues predominate over residues 204–215 (QTQQNKSQCCSN). 2 S-geranylgeranyl cysteine lipidation sites follow: C212 and C213.

This sequence belongs to the small GTPase superfamily. Rab family. It depends on Mg(2+) as a cofactor.

It is found in the cell membrane. It localises to the early endosome membrane. The enzyme catalyses GTP + H2O = GDP + phosphate + H(+). With respect to regulation, regulated by guanine nucleotide exchange factors (GEFs) which promote the exchange of bound GDP for free GTP. Regulated by GTPase activating proteins (GAPs) which increase the GTP hydrolysis activity. Inhibited by GDP dissociation inhibitors (GDIs). The small GTPases Rab are key regulators of intracellular membrane trafficking, from the formation of transport vesicles to their fusion with membranes. Rabs cycle between an inactive GDP-bound form and an active GTP-bound form that is able to recruit to membranes different sets of downstream effectors directly responsible for vesicle formation, movement, tethering and fusion. The protein is Ras-related protein Rab-5B (RAB5B) of Gallus gallus (Chicken).